Consider the following 262-residue polypeptide: Thiamine thiazole synthase (262 aa).

NAD(+)-binding positions include Ser40, 59–60, Gly67, Val133, and 159–161; these read ER and HID. 2 residues coordinate Fe cation: Asp161 and His176. The NAD(+) site is built by Ser179 and Met226. Arg236 provides a ligand contact to glycine.

The protein belongs to the THI4 family. Homooctamer; tetramer of dimers. It depends on Fe(2+) as a cofactor.

The enzyme catalyses hydrogen sulfide + glycine + NAD(+) = ADP-5-ethyl-4-methylthiazole-2-carboxylate + nicotinamide + 3 H2O + H(+). It functions in the pathway cofactor biosynthesis; thiamine diphosphate biosynthesis. Functionally, involved in the biosynthesis of the thiazole moiety of thiamine. Catalyzes the conversion of NAD and glycine to adenosine diphosphate 5-(2-hydroxyethyl)-4-methylthiazole-2-carboxylate (ADT), an adenylated thiazole intermediate, using free sulfide as a source of sulfur. This chain is Thiamine thiazole synthase, found in Methanococcus maripaludis (strain C7 / ATCC BAA-1331).